The chain runs to 223 residues: Endonuclease III (223 aa).

The HhH domain occupies 118 to 137; that stretch reads RDFLTAIEGIGDKTADVVLL. [4Fe-4S] cluster contacts are provided by Cys198, Cys205, Cys208, and Cys214.

This sequence belongs to the Nth/MutY family. It depends on [4Fe-4S] cluster as a cofactor.

The enzyme catalyses 2'-deoxyribonucleotide-(2'-deoxyribose 5'-phosphate)-2'-deoxyribonucleotide-DNA = a 3'-end 2'-deoxyribonucleotide-(2,3-dehydro-2,3-deoxyribose 5'-phosphate)-DNA + a 5'-end 5'-phospho-2'-deoxyribonucleoside-DNA + H(+). Probably part of a 4-gene DNA damage response locus in which the upstream ups system, in combination with this downstream locus, functions in homologous recombination to rescue Sulfolobales from DNA-damaging threats. DNA repair enzyme that has both DNA N-glycosylase activity and AP-lyase activity. The DNA N-glycosylase activity releases various damaged pyrimidines from DNA by cleaving the N-glycosidic bond, leaving an AP (apurinic/apyrimidinic) site. The AP-lyase activity cleaves the phosphodiester bond 3' to the AP site by a beta-elimination, leaving a 3'-terminal unsaturated sugar and a product with a terminal 5'-phosphate. Nicks UV-treated plasmid DNA in a dose-dependent manner, has no activity on untreated DNA. In Sulfolobus acidocaldarius (strain ATCC 33909 / DSM 639 / JCM 8929 / NBRC 15157 / NCIMB 11770), this protein is Endonuclease III.